The primary structure comprises 1616 residues: Replicase large subunit (1616 aa).

A methyltransferase region spans residues 50–458 (FSKVISEEQT…QSLSMTFYLH (409 aa)). The Alphavirus-like MT domain occupies 72-281 (TFYNTQNAVH…HSYSNILKYV (210 aa)). The (+)RNA virus helicase ATP-binding domain maps to 801–963 (VVYSDMAKLR…KLEVDEVETR (163 aa)). A helicase region spans residues 830–1085 (LVDGVPGCGK…RHTCSLKYYT (256 aa)). 833–840 (GVPGCGKT) serves as a coordination point for ATP. In terms of domain architecture, (+)RNA virus helicase C-terminal spans 964–1116 (RTTLRCPADV…DMYKVDAGTQ (153 aa)). The RdRp catalytic domain occupies 1380–1493 (MDVLELDISK…YFPKGCEFPD (114 aa)).

The protein belongs to the ssRNA positive-strand viruses RNA-directed RNA polymerase family. Heterodimer of a large and a small subunit. Interacts, via its helicase region, with the Nicotiana tabacum arginine decarboxylase 1A (ADC1A) C-terminal internal region.

It catalyses the reaction RNA(n) + a ribonucleoside 5'-triphosphate = RNA(n+1) + diphosphate. It carries out the reaction ATP + H2O = ADP + phosphate + H(+). Is an RNA-dependent RNA polymerase active in viral RNA replication. Functionally, is a methyltransferase active in RNA capping and an RNA helicase. Methyltransferase displays a cytoplasmic capping enzyme activity. This function is necessary since all viral RNAs are synthesized in the cytoplasm, and host capping enzymes are restricted to the nucleus. Helicase region probably exhibits NTPase and RNA unwinding activities (Potential). It also acts as a suppressor of RNA-mediated gene silencing, also known as post-transcriptional gene silencing (PTGS), a mechanism of plant viral defense that limits the accumulation of viral RNAs. May mediate silencing suppression through either inhibition of HEN1-mediated siRNA or siRNA demethylation. In Nicotiana tabacum (Common tobacco), this protein is Replicase large subunit.